Here is a 164-residue protein sequence, read N- to C-terminus: NADH-quinone oxidoreductase subunit I (164 aa).

4Fe-4S ferredoxin-type domains are found at residues 55–85 and 95–124; these read LRRY…IDAE and TRYD…EGPN. Positions 65, 68, 71, 75, 104, 107, 110, and 114 each coordinate [4Fe-4S] cluster.

It belongs to the complex I 23 kDa subunit family. In terms of assembly, NDH-1 is composed of 14 different subunits. Subunits NuoA, H, J, K, L, M, N constitute the membrane sector of the complex. Requires [4Fe-4S] cluster as cofactor.

The protein resides in the cell inner membrane. The enzyme catalyses a quinone + NADH + 5 H(+)(in) = a quinol + NAD(+) + 4 H(+)(out). NDH-1 shuttles electrons from NADH, via FMN and iron-sulfur (Fe-S) centers, to quinones in the respiratory chain. The immediate electron acceptor for the enzyme in this species is believed to be ubiquinone. Couples the redox reaction to proton translocation (for every two electrons transferred, four hydrogen ions are translocated across the cytoplasmic membrane), and thus conserves the redox energy in a proton gradient. This chain is NADH-quinone oxidoreductase subunit I, found in Jannaschia sp. (strain CCS1).